A 526-amino-acid polypeptide reads, in one-letter code: Acid-sensing ion channel 1 (526 aa).

The Cytoplasmic portion of the chain corresponds to 1–49; that stretch reads MELKTEEEEVGGVQPVSIQAFASSSTLHGLAHIFSYERLSLKRALWALC. A helical membrane pass occupies residues 50 to 66; the sequence is FLGSLAVLLCVCTERVQ. Residues 67–425 lie on the Extracellular side of the membrane; that stretch reads YYFCYHHVTK…ETIEQKKAYE (359 aa). Cystine bridges form between cysteine 93–cysteine 194, cysteine 172–cysteine 179, cysteine 290–cysteine 365, cysteine 308–cysteine 361, cysteine 312–cysteine 359, cysteine 321–cysteine 343, and cysteine 323–cysteine 335. Residues asparagine 366 and asparagine 393 are each glycosylated (N-linked (GlcNAc...) asparagine). Residues 426 to 456 traverse the membrane as a discontinuously helical segment; sequence IAGLLGDIGGQMGLFIGASILTVLELFDYAY. Residues 442-444 carry the GAS motif; ion selectivity filter motif; that stretch reads GAS. Residues 457 to 526 are Cytoplasmic-facing; that stretch reads EVIKHRLCRR…ARGTFEDFTC (70 aa). Serine 477 is subject to Phosphoserine; by PKA. Position 497 is a phosphoserine (serine 497).

This sequence belongs to the amiloride-sensitive sodium channel (TC 1.A.6) family. ASIC1 subfamily. In terms of assembly, homotrimer. Heterotrimer; with other ASIC proteins producing channel with different properties. Interacts with PICK1; regulates ASIC1 clustering in membranes. Interacts with STOM; alters heterotrimeric ASIC channels activity. Post-translationally, pH-gating could be regulated by serine proteases. In terms of processing, phosphorylation by PKA regulates interaction with PICK1 and subcellular localization. Phosphorylation by PKC may regulate the channel. Expressed in brain areas receiving strong excitatory corticofugal input. In hippocampus, expressed in the hilus of the dentate gyrus. In the cerebral cortex expressed in anterior and posterior cingulate cortex, sensory and motor cortices. In the sensory cortex strongest expression is detected in the whisker barrel field. In sensorimotor and cingulate cortex expression is elevated in layer III. Also expressed in basal ganglia, striatum, ventral pallidum, olfactory tubercle, and nucleus accumbens. Weakly expressed in thalamus with the exception of the habenula and the medial septal nuclei. In olfactory bulb, preferentially expressed in the glomerular layer, within glomeruli. Expressed in cerebellum in the molecular and granule cell layers. Strongly expressed in amygdala complex, particularly in the lateral and basolateral nuclei. Isoform 1 is more abundant in brain compared to isoform 2 (at protein level). Expressed in the nodose ganglion and dorsal root ganglion. Expressed in dendritic spine cells.

It is found in the cell membrane. Its subcellular location is the postsynaptic cell membrane. The protein resides in the cell projection. The protein localises to the dendrite. It carries out the reaction Na(+)(in) = Na(+)(out). The catalysed reaction is Ca(2+)(in) = Ca(2+)(out). The enzyme catalyses K(+)(in) = K(+)(out). It catalyses the reaction Li(+)(in) = Li(+)(out). Inhibited by the diuretic drug amiloride. With respect to regulation, the activity of the channel is sensitive to rapid decrease in osmotic pressure. Functionally, forms voltage-independent, pH-gated trimeric sodium channels that act as postsynaptic excitatory receptors in the nervous system, playing a crucial role in regulating synaptic plasticity, learning, and memory. Upon extracellular pH drop this channel elicits transient, fast activating, and completely desensitizing inward currents. Displays high selectivity for sodium ions but can also permit the permeation of other cations. Regulates more or less directly intracellular calcium concentration and CaMKII phosphorylation, and thereby the density of dendritic spines. Modulates neuronal activity in the circuits underlying innate fear. Its function is as follows. Has high selectivity for sodium ions but is also potentially permeable to other cations including potassium. Could function in cochlear mechanoelectrical transduction. The sequence is that of Acid-sensing ion channel 1 from Mus musculus (Mouse).